A 365-amino-acid chain; its full sequence is Chorismate synthase (365 aa).

Arg46 is an NADP(+) binding site. Residues 123–125, 241–242, Gly281, 296–300, and Arg322 contribute to the FMN site; these read RSS, NG, and KPTPS.

It belongs to the chorismate synthase family. Homotetramer. The cofactor is FMNH2.

It carries out the reaction 5-O-(1-carboxyvinyl)-3-phosphoshikimate = chorismate + phosphate. The protein operates within metabolic intermediate biosynthesis; chorismate biosynthesis; chorismate from D-erythrose 4-phosphate and phosphoenolpyruvate: step 7/7. Functionally, catalyzes the anti-1,4-elimination of the C-3 phosphate and the C-6 proR hydrogen from 5-enolpyruvylshikimate-3-phosphate (EPSP) to yield chorismate, which is the branch point compound that serves as the starting substrate for the three terminal pathways of aromatic amino acid biosynthesis. This reaction introduces a second double bond into the aromatic ring system. The polypeptide is Chorismate synthase (Helicobacter pylori (strain G27)).